The chain runs to 197 residues: Dephospho-CoA kinase (197 aa).

Residues 2-197 form the DPCK domain; the sequence is RIGLTGGIAS…YDALAKTAHE (196 aa). Position 10–15 (10–15) interacts with ATP; it reads ASGKSL.

Belongs to the CoaE family.

It localises to the cytoplasm. It catalyses the reaction 3'-dephospho-CoA + ATP = ADP + CoA + H(+). It functions in the pathway cofactor biosynthesis; coenzyme A biosynthesis; CoA from (R)-pantothenate: step 5/5. Functionally, catalyzes the phosphorylation of the 3'-hydroxyl group of dephosphocoenzyme A to form coenzyme A. This chain is Dephospho-CoA kinase, found in Shouchella clausii (strain KSM-K16) (Alkalihalobacillus clausii).